The chain runs to 244 residues: 1-(5-phosphoribosyl)-5-[(5-phosphoribosylamino)methylideneamino] imidazole-4-carboxamide isomerase (244 aa).

D8 serves as the catalytic Proton acceptor. D130 acts as the Proton donor in catalysis.

Belongs to the HisA/HisF family.

It is found in the cytoplasm. The catalysed reaction is 1-(5-phospho-beta-D-ribosyl)-5-[(5-phospho-beta-D-ribosylamino)methylideneamino]imidazole-4-carboxamide = 5-[(5-phospho-1-deoxy-D-ribulos-1-ylimino)methylamino]-1-(5-phospho-beta-D-ribosyl)imidazole-4-carboxamide. The protein operates within amino-acid biosynthesis; L-histidine biosynthesis; L-histidine from 5-phospho-alpha-D-ribose 1-diphosphate: step 4/9. The sequence is that of 1-(5-phosphoribosyl)-5-[(5-phosphoribosylamino)methylideneamino] imidazole-4-carboxamide isomerase from Hahella chejuensis (strain KCTC 2396).